The following is a 587-amino-acid chain: Phosphatidylinositol-3-phosphatase SAC1 (587 aa).

Residues 1-520 are Cytoplasmic-facing; the sequence is MAATAYEHLK…SPLSVPRDWK (520 aa). One can recognise an SAC domain in the interval 122–451; it reads LNHVLSTDGF…ANACAKQYAG (330 aa). An essential for phosphatidylinositol-4-phosphate phosphatase activity region spans residues 452 to 587; it reads TGALKTDFTR…PRLVQKEKID (136 aa). At K456 the chain carries N6-acetyllysine. A helical transmembrane segment spans residues 521–541; it reads FLALPIIMVVAFSMCIICLLM. The Lumenal segment spans residues 542 to 548; sequence AGDTWTE. Residues 549-569 traverse the membrane as a helical segment; that stretch reads TLAYVLFWGVASIGTFFIILY. The Cytoplasmic segment spans residues 570 to 587; it reads NGKDFVDAPRLVQKEKID.

As to quaternary structure, interacts with TMEM39A. Interacts with SEC23A and SEC24A; this interaction is reduced in the absence of TMEM39A. Interacts with PLEKHA3 and VAPA and/or VAPB to form a ternary complex. In terms of tissue distribution, detected in spleen, lung, liver, skeletal muscle, kidney, testis and in cerebellar Purkinje cells (at protein level). Ubiquitous. Highly expressed in brain, spleen, liver and kidney.

It localises to the endoplasmic reticulum membrane. The protein localises to the golgi apparatus membrane. The enzyme catalyses a 1,2-diacyl-sn-glycero-3-phospho-(1D-myo-inositol-3-phosphate) + H2O = a 1,2-diacyl-sn-glycero-3-phospho-(1D-myo-inositol) + phosphate. The catalysed reaction is a 1,2-diacyl-sn-glycero-3-phospho-(1D-myo-inositol 4-phosphate) + H2O = a 1,2-diacyl-sn-glycero-3-phospho-(1D-myo-inositol) + phosphate. Functionally, phosphoinositide phosphatase which catalyzes the hydrolysis of phosphatidylinositol 4-phosphate (PtdIns(4)P), phosphatidylinositol 3-phosphate (PtdIns(3)P) and has low activity towards phosphatidylinositol-3,5-bisphosphate (PtdIns(3,5)P2). Shows a very robust PtdIns(4)P phosphatase activity when it binds PtdIns(4)P in a 'cis' configuration in the cellular environment, with much less activity seen when it binds PtdIns(4)P in 'trans' configuration. PtdIns(4)P phosphatase activity (when it binds PtdIns(4)P in 'trans' configuration) is enhanced in the presence of PLEKHA3. This is Phosphatidylinositol-3-phosphatase SAC1 (Sacm1l) from Rattus norvegicus (Rat).